The chain runs to 205 residues: Putative 3-methyladenine DNA glycosylase (205 aa).

Belongs to the DNA glycosylase MPG family.

This is Putative 3-methyladenine DNA glycosylase from Clostridium perfringens (strain SM101 / Type A).